The primary structure comprises 485 residues: Glutamyl-tRNA(Gln) amidotransferase subunit A (485 aa).

Residues K76 and S152 each act as charge relay system in the active site. S176 acts as the Acyl-ester intermediate in catalysis.

It belongs to the amidase family. GatA subfamily. In terms of assembly, heterotrimer of A, B and C subunits.

The enzyme catalyses L-glutamyl-tRNA(Gln) + L-glutamine + ATP + H2O = L-glutaminyl-tRNA(Gln) + L-glutamate + ADP + phosphate + H(+). Functionally, allows the formation of correctly charged Gln-tRNA(Gln) through the transamidation of misacylated Glu-tRNA(Gln) in organisms which lack glutaminyl-tRNA synthetase. The reaction takes place in the presence of glutamine and ATP through an activated gamma-phospho-Glu-tRNA(Gln). In Dechloromonas aromatica (strain RCB), this protein is Glutamyl-tRNA(Gln) amidotransferase subunit A.